The primary structure comprises 347 residues: S-adenosylmethionine:tRNA ribosyltransferase-isomerase (347 aa).

It belongs to the QueA family. In terms of assembly, monomer.

Its subcellular location is the cytoplasm. The catalysed reaction is 7-aminomethyl-7-carbaguanosine(34) in tRNA + S-adenosyl-L-methionine = epoxyqueuosine(34) in tRNA + adenine + L-methionine + 2 H(+). It participates in tRNA modification; tRNA-queuosine biosynthesis. Transfers and isomerizes the ribose moiety from AdoMet to the 7-aminomethyl group of 7-deazaguanine (preQ1-tRNA) to give epoxyqueuosine (oQ-tRNA). In Pseudomonas aeruginosa (strain UCBPP-PA14), this protein is S-adenosylmethionine:tRNA ribosyltransferase-isomerase.